The following is a 590-amino-acid chain: UvrABC system protein C (590 aa).

A GIY-YIG domain is found at 11–85; sequence ETPGVYLWKR…IKAHRPLYNV (75 aa). One can recognise a UVR domain in the interval 194 to 229; that stretch reads DGLLQELEAKMREAARRLEFERAAEIRDQMEALRAF.

It belongs to the UvrC family. Interacts with UvrB in an incision complex.

The protein localises to the cytoplasm. Its function is as follows. The UvrABC repair system catalyzes the recognition and processing of DNA lesions. UvrC both incises the 5' and 3' sides of the lesion. The N-terminal half is responsible for the 3' incision and the C-terminal half is responsible for the 5' incision. This chain is UvrABC system protein C, found in Thermus thermophilus (strain ATCC 27634 / DSM 579 / HB8).